The primary structure comprises 286 residues: ATP synthase gamma chain (286 aa).

Belongs to the ATPase gamma chain family. In terms of assembly, F-type ATPases have 2 components, CF(1) - the catalytic core - and CF(0) - the membrane proton channel. CF(1) has five subunits: alpha(3), beta(3), gamma(1), delta(1), epsilon(1). CF(0) has three main subunits: a, b and c.

The protein localises to the cell inner membrane. Its function is as follows. Produces ATP from ADP in the presence of a proton gradient across the membrane. The gamma chain is believed to be important in regulating ATPase activity and the flow of protons through the CF(0) complex. The sequence is that of ATP synthase gamma chain from Alcanivorax borkumensis (strain ATCC 700651 / DSM 11573 / NCIMB 13689 / SK2).